Consider the following 624-residue polypeptide: Chaperone protein HtpG (624 aa).

Residues 1-336 form an a; substrate-binding region; it reads MKGQETRGFQ…SSDLPLNVSR (336 aa). Residues 337-552 form a b region; that stretch reads EILQDSTVTR…ADEMSTQMAK (216 aa). The interval 553–624 is c; it reads LFAAAGQKVP…IRRMNQLLVS (72 aa).

Belongs to the heat shock protein 90 family. Homodimer.

It localises to the cytoplasm. Functionally, molecular chaperone. Has ATPase activity. In Escherichia coli O139:H28 (strain E24377A / ETEC), this protein is Chaperone protein HtpG.